Here is a 188-residue protein sequence, read N- to C-terminus: Peptide deformylase (188 aa).

A disordered region spans residues 70-90 (AEPVACDHDGHHHHHQPTKKE). Positions 113 and 155 each coordinate Fe cation. Glutamate 156 is a catalytic residue. A Fe cation-binding site is contributed by histidine 159.

The protein belongs to the polypeptide deformylase family. The cofactor is Fe(2+).

The catalysed reaction is N-terminal N-formyl-L-methionyl-[peptide] + H2O = N-terminal L-methionyl-[peptide] + formate. Its function is as follows. Removes the formyl group from the N-terminal Met of newly synthesized proteins. Requires at least a dipeptide for an efficient rate of reaction. N-terminal L-methionine is a prerequisite for activity but the enzyme has broad specificity at other positions. This chain is Peptide deformylase, found in Novosphingobium aromaticivorans (strain ATCC 700278 / DSM 12444 / CCUG 56034 / CIP 105152 / NBRC 16084 / F199).